A 611-amino-acid polypeptide reads, in one-letter code: Calmegin (611 aa).

A signal peptide spans 1-19; the sequence is MRFQGVGLCLGLLFITVNA. At 20-471 the chain is on the lumenal side; it reads DFMDDGVEVE…LVIAAEERPW (452 aa). An N6-acetyllysine modification is found at Lys128. An intrachain disulfide couples Cys151 to Cys185. The interval 254–335 is disordered; the sequence is LDDVVPPINP…KAEKPEDWSD (82 aa). Basic and acidic residues predominate over residues 265 to 284; it reads REIDDPSDKKPEEWDDRAKI. 8 tandem repeats follow at residues 267–280, 284–297, 303–316, 322–335, 339–352, 356–369, 370–383, and 384–397. The interval 317-350 is interaction with PPIB; the sequence is DEPKFIPNPKAEKPEDWSDDMDGEWEAPHIPNPA. An intrachain disulfide couples Cys351 to Cys355. A helical membrane pass occupies residues 472–492; the sequence is LWLMYLVMAGLPVALVASFCW. The Cytoplasmic segment spans residues 493-611; sequence PRKVKKKYED…SLRKRRVRKD (119 aa). The segment at 517–611 is disordered; that stretch reads AALEQEAEEE…SLRKRRVRKD (95 aa). The segment covering 526–584 has biased composition (basic and acidic residues); that stretch reads EKAPEKPEDVQEEKKPGEAEVVTVEKEVIGEPEEKSKEDRETLEGQEEVSKLSKSGSED. 7 positions are modified to phosphoserine: Ser561, Ser578, Ser580, Ser582, Ser592, Ser595, and Ser602. The segment covering 602-611 has biased composition (basic residues); that stretch reads SLRKRRVRKD.

This sequence belongs to the calreticulin family. As to quaternary structure, interacts with PDILT and PPIB. Interacts with ADAM2. Interacts with ADAM1A, ADAM1B and ADAM3; these are protein-coding genes in mouse but may be pseudogenes in other organisms. In terms of tissue distribution, detected in testis (at protein level). Detected in testis.

Its subcellular location is the endoplasmic reticulum membrane. In terms of biological role, functions during spermatogenesis as a chaperone for a range of client proteins that are important for sperm adhesion onto the egg zona pellucida and for subsequent penetration of the zona pellucida. Required for normal sperm migration from the uterus into the oviduct. Required for normal male fertility. Binds calcium ions. This Mus musculus (Mouse) protein is Calmegin (Clgn).